Consider the following 236-residue polypeptide: Uridylate kinase (236 aa).

Residue 9 to 12 (KISG) participates in ATP binding. UMP is bound at residue Gly51. ATP-binding residues include Gly52 and Arg56. UMP is bound by residues Asp71 and 132 to 139 (TGNSHFTT). 2 residues coordinate ATP: Tyr166 and Asp169.

Belongs to the UMP kinase family. As to quaternary structure, homohexamer.

Its subcellular location is the cytoplasm. It carries out the reaction UMP + ATP = UDP + ADP. It participates in pyrimidine metabolism; CTP biosynthesis via de novo pathway; UDP from UMP (UMPK route): step 1/1. With respect to regulation, inhibited by UTP. Catalyzes the reversible phosphorylation of UMP to UDP. This chain is Uridylate kinase, found in Mycoplasmoides gallisepticum (strain R(low / passage 15 / clone 2)) (Mycoplasma gallisepticum).